Here is a 69-residue protein sequence, read N- to C-terminus: uncharacterized protein (69 aa).

This is an uncharacterized protein from Lepidoptera (butterflies and moths).